The sequence spans 184 residues: ADP-ribosylation factor-like protein 8c (184 aa).

Positions 1–18 (MGLWDSLLNWLRSLFFKQ) form an intramembrane region, note=Mediates targeting to membranes. GTP is bound by residues 29–34 (NAGKTS), 48–51 (MIPT), 70–74 (DLGGQ), and 129–132 (NKID).

Belongs to the small GTPase superfamily. Arf family. In terms of assembly, interacts with tubulin.

The protein resides in the late endosome membrane. Its subcellular location is the lysosome membrane. It is found in the cytoplasm. The protein localises to the cytoskeleton. It localises to the spindle. Its function is as follows. May play a role in lysosome motility. May play a role in chromosome segregation. Functionally, (Microbial infection) Component of tomato mosaic virus (ToMV) RNA replication complexes. Required for tobamovirus multiplication, especially for efficient negative-strand RNA synthesis and viral RNA capping. This is ADP-ribosylation factor-like protein 8c from Arabidopsis thaliana (Mouse-ear cress).